The primary structure comprises 53 residues: Conotoxin-like peptide 1 (53 aa).

Positions 1–18 (MGVKSALFIMAVFAAANV) are cleaved as a signal peptide. Cystine bridges form between cysteine 25–cysteine 39, cysteine 32–cysteine 43, and cysteine 38–cysteine 50.

It is found in the secreted. This chain is Conotoxin-like peptide 1 (CTL-1), found in Orgyia pseudotsugata multicapsid polyhedrosis virus (OpMNPV).